Here is a 473-residue protein sequence, read N- to C-terminus: Cannabinoid receptor 1 (473 aa).

Residues 1–118 (MKSILDGLAD…CFMILTASQQ (118 aa)) lie on the Extracellular side of the membrane. The required for mitochondrial localization stretch occupies residues 2–23 (KSILDGLADTTFRTITTDLLYM). N-linked (GlcNAc...) asparagine glycosylation is found at N79 and N85. The chain crosses the membrane as a helical span at residues 119–144 (LIIAVLSLTLGTFTVLENFLVLCVIL). The Cytoplasmic segment spans residues 145–156 (QSRTLRCRPSYH). The chain crosses the membrane as a helical span at residues 157–177 (FIGSLAVADLLGSVIFVYSFL). The Extracellular portion of the chain corresponds to 178 to 189 (DFHVFHRKDSSN). Residues 190–214 (VFLFKLGGVTASFTASVGSLFLTAI) traverse the membrane as a helical segment. Over 215–234 (DRYISIHRPLAYKRIVTRTK) the chain is Cytoplasmic. Residues 235 to 257 (AVIAFCVMWTIAIIIAVLPLLGW) form a helical membrane-spanning segment. Residues 258-275 (NCKKLKSVCSDIFPLIDE) lie on the Extracellular side of the membrane. Residues 276-301 (NYLMFWIGVTSILLLFIVYAYVYILW) form a helical membrane-spanning segment. At 302 to 346 (KAHSHAVRMLQRGTQKSIIIHTSEDGKVQITRPEQTRMDIRLAKT) the chain is on the cytoplasmic side. The helical transmembrane segment at 347 to 367 (LVLILVVLIICWGPLLAIMVY) threads the bilayer. Residues 368–379 (DVFGKMNNPIKT) are Extracellular-facing. Residues 380–401 (VFAFCSMLCLMDSTVNPIIYAL) form a helical membrane-spanning segment. At 402-473 (RSQDLRHAFL…VSTETSGEAV (72 aa)) the chain is on the cytoplasmic side. C417 carries S-palmitoyl cysteine lipidation.

Belongs to the G-protein coupled receptor 1 family. In terms of processing, palmitoylation at Cys-417 is important for recruitment at both plasma membrane and lipid rafts and association with G protein alpha subunits.

It localises to the cell membrane. Its subcellular location is the mitochondrion outer membrane. The protein localises to the cell projection. It is found in the axon. The protein resides in the presynapse. With respect to regulation, hemopressin, a peptide derived from hemoglobin subunit alpha (HBA1 and/or HBA2), acts as an antagonist peptide: hemopressin-binding efficiently blocks cannabinoid receptor CNR1 and subsequent signaling. Functionally, G-protein coupled receptor for cannabinoids. Mediates many cannabinoid-induced effects in the central nervous system (CNS), as well as in peripheral tissues. Regulates cellular respiration and energy production in response to cannabinoids. Signaling typically involves reduction in cyclic AMP. In Taricha granulosa (Roughskin newt), this protein is Cannabinoid receptor 1 (CNR1).